A 1082-amino-acid chain; its full sequence is Neisserial autotransporter lipoprotein NalP (1082 aa).

A signal peptide spans 1–27 (MRTTPTFPTKTFKPTAMALAVATTLSA). C28 carries the N-palmitoyl cysteine lipid modification. The S-diacylglycerol cysteine moiety is linked to residue C28. The region spanning 110 to 482 (NDAYKNLINL…WGLLDAGKAM (373 aa)) is the Peptidase S8 domain. Catalysis depends on charge relay system residues D138, H210, and S426. An Autotransporter domain is found at 808 to 1082 (DGLDHNGTGL…SGRVGVGYRF (275 aa)).

The protein belongs to the peptidase S8 family. In terms of processing, probably auto-processes to yield a 68-70 kDa form and a C-terminal 30 kDa translocator domain; upon overexpression in situ and in E.coli full-length protein is seen as well as (probably) auto-processed forms of 68-70 kDa and 30 kDa in size, suggesting this may have protease activity.

It localises to the cell outer membrane. The protein localises to the cell surface. It is found in the secreted. The protein resides in the host cytoplasm. Its subcellular location is the host perinuclear region. Cleavage of host complement factor C3 is inhibited by PMSF. In terms of biological role, major human immunogenic protein, detected in patients recovering from meningitidis. Autotransporter with a secreted protease domain involved in processing other autotransporter proteins including App, IgA, LbpB and NHBA. Probably autoprocesses to release the about 70 kDa passenger domain. Both cell surface protein (Neisserial autotransporter lipoprotein NalP) and the passenger domain cleave human (host) complement factor C3, generating a shorter alpha chain and a longer beta chain than normal. Uptake of a passenger domain fragment (residues 101-784) by human cells increases cell metabolic activity; the serine protease activity is required for this increase. Functionally, cleaves human (host) complement factor C3, generating a shorter alpha chain and a longer beta chain than normal. Does not act on mouse or rabbit C3. Cleavage causes C3b degradation by human CFI and CFH, and thus decreases deposition of C3b on the bacteria surface and probably facilitates complement escape. Plays a role in extracellular-DNA (eDNA) mediated biofilm formation. In some strains (including cc32 strain MC58) eDNA stimulates biofilm formation. When NalP is not expressed (and no longer processes NHBA or IgA) biofilm formation increases. The polypeptide is Neisserial autotransporter lipoprotein NalP (Neisseria meningitidis serogroup B (strain ATCC BAA-335 / MC58)).